Consider the following 734-residue polypeptide: Photosystem I P700 chlorophyll a apoprotein A2 (734 aa).

The next 8 membrane-spanning stretches (helical) occupy residues 46 to 69 (IFAS…FHVA), 135 to 158 (LYTG…LHLQ), 175 to 199 (LNHH…HVAI), 273 to 291 (VAHH…GLMY), 330 to 353 (IHFQ…QHMY), 369 to 395 (AALY…IFFI), 417 to 439 (AIIS…LYVH), and 517 to 535 (FLVH…LILV). [4Fe-4S] cluster contacts are provided by Cys-559 and Cys-568. The next 2 membrane-spanning stretches (helical) occupy residues 575-596 (DFYL…YWHW) and 643-665 (LSVW…MFLI). His-654, Met-662, and Tyr-670 together coordinate chlorophyll a. Phylloquinone is bound at residue Trp-671. Residues 707-727 (LVGLVHFSVGYIFTYAAFLIA) traverse the membrane as a helical segment.

This sequence belongs to the PsaA/PsaB family. As to quaternary structure, the PsaA/B heterodimer binds the P700 chlorophyll special pair and subsequent electron acceptors. PSI consists of a core antenna complex that captures photons, and an electron transfer chain that converts photonic excitation into a charge separation. The eukaryotic PSI reaction center is composed of at least 11 subunits. It depends on P700 is a chlorophyll a/chlorophyll a' dimer, A0 is one or more chlorophyll a, A1 is one or both phylloquinones and FX is a shared 4Fe-4S iron-sulfur center. as a cofactor.

The protein localises to the plastid. Its subcellular location is the chloroplast thylakoid membrane. It catalyses the reaction reduced [plastocyanin] + hnu + oxidized [2Fe-2S]-[ferredoxin] = oxidized [plastocyanin] + reduced [2Fe-2S]-[ferredoxin]. PsaA and PsaB bind P700, the primary electron donor of photosystem I (PSI), as well as the electron acceptors A0, A1 and FX. PSI is a plastocyanin-ferredoxin oxidoreductase, converting photonic excitation into a charge separation, which transfers an electron from the donor P700 chlorophyll pair to the spectroscopically characterized acceptors A0, A1, FX, FA and FB in turn. Oxidized P700 is reduced on the lumenal side of the thylakoid membrane by plastocyanin. In Pisum sativum (Garden pea), this protein is Photosystem I P700 chlorophyll a apoprotein A2.